Here is a 639-residue protein sequence, read N- to C-terminus: Far upstream element-binding protein 1 (639 aa).

Disordered stretches follow at residues 1 to 27 and 40 to 88; these read MADYSTVPPPSSGSAGGGGGGGVNDAF and KIGG…LPPM. The residue at position 2 (A2) is an N-acetylalanine. Residues 14–23 are compositionally biased toward gly residues; the sequence is SAGGGGGGGV. Phosphoserine occurs at positions 48 and 51. Basic and acidic residues predominate over residues 61-73; sequence RPLEDGDQPDAKK. KH domains follow at residues 95-159, 180-246, and 270-334; these read VMTE…KRLL, NAVQ…KEMV, and NEGI…AEII. S135 carries the post-translational modification Phosphoserine. The residue at position 148 (T148) is a Phosphothreonine. 4 positions are modified to omega-N-methylarginine: R316, R354, R356, and R358. The disordered stretch occupies residues 341 to 360; that stretch reads VQAGNPGGPGPGGRGRGRGQ. A compositionally biased stretch (gly residues) spans 345–360; that stretch reads NPGGPGPGGRGRGRGQ. One can recognise a KH 4 domain in the interval 371–438; it reads LQEFNFIVPT…QQIDYARQLI (68 aa). Residue T427 is modified to Phosphothreonine. Disordered stretches follow at residues 442-527 and 543-574; these read IGGP…GTDP and QAQPPPAAPAGAPTTTQTNGQGDQQNPAPAGQ. Over residues 463–500 the composition is skewed to pro residues; the sequence is PHGPPGPPGPGTPMGPYNPAPYNPGPPGPAPHGPPAPY. Residues 551-568 are compositionally biased toward low complexity; the sequence is PAGAPTTTQTNGQGDQQN. S625 is subject to Phosphoserine.

As to quaternary structure, found in a complex with PUF60 and far upstream element (FUSE) DNA segment. Interacts with PUF60 and JTV1. In terms of processing, ubiquitinated. This targets the protein for proteasome-mediated degradation.

The protein resides in the nucleus. Its function is as follows. Regulates MYC expression by binding to a single-stranded far-upstream element (FUSE) upstream of the MYC promoter. May act both as activator and repressor of transcription. In Rattus norvegicus (Rat), this protein is Far upstream element-binding protein 1.